The following is a 298-amino-acid chain: Protein DR_1172 (298 aa).

LEA-like repeat units follow at residues 48-117 (DAAQ…NVGQ), 128-197 (DQAK…DVAQ), and 201-270 (QGAQ…AGKQ). The span at 174–193 (VQDVKADASKAADQAKDKAQ) shows a compositional bias: basic and acidic residues. The disordered stretch occupies residues 174 to 298 (VQDVKADASK…MTGNTNTRKN (125 aa)). Residues 194–208 (DVAQNVKQGAQQAAS) are compositionally biased toward low complexity. A compositionally biased stretch (basic and acidic residues) spans 209-233 (DAKDKVQDVKADASRAADQAKDKAQ). Over residues 275–298 (GSTTNNAGTAGNTGMTGNTNTRKN) the composition is skewed to low complexity.

Belongs to the LEA type 1 family.

This Deinococcus radiodurans (strain ATCC 13939 / DSM 20539 / JCM 16871 / CCUG 27074 / LMG 4051 / NBRC 15346 / NCIMB 9279 / VKM B-1422 / R1) protein is Protein DR_1172.